Consider the following 275-residue polypeptide: uncharacterized protein (275 aa).

This is an uncharacterized protein from Enterobacteria phage T4 (Bacteriophage T4).